Consider the following 524-residue polypeptide: Solute carrier family 35 member F5 (524 aa).

The next 2 helical transmembrane spans lie at 69 to 89 and 101 to 121; these read MALGIVILLLVDVIWVASSEL and FFSTFAKTSMFVLYLLGFIIW. Serine 207 is subject to Phosphoserine. A run of 8 helical transmembrane segments spans residues 244–264, 269–289, 297–317, 328–348, 362–382, 396–416, 421–441, and 453–473; these read ISFFFCFVWFLANLSYQEALS, AIVNILSSTSGLFTLILAAVF, FTLSKLLAVILSIGGVVLVNL, TIGSIWSLAGAMFYAVYIVMI, MFFGFVGLFNLLLLWPGFFLL, VVLLCIIINGLIGTVLSEFLW, FLTSSLIGTLALSLTIPLSII, and WLFFAGAIPVFFSFFIVTLLC. The EamA domain maps to 253–317; that stretch reads FLANLSYQEA…SIGGVVLVNL (65 aa).

This sequence belongs to the SLC35F solute transporter family.

The protein localises to the membrane. Its function is as follows. Putative solute transporter. The polypeptide is Solute carrier family 35 member F5 (Slc35f5) (Mus musculus (Mouse)).